The sequence spans 248 residues: Neurotrophic factor BDNF precursor form (248 aa).

A signal peptide spans 1–18 (MTILFLTMVISYFSCMKA). Residues 19-129 (APMKEANVRG…AANMSMRVRR (111 aa)) constitute a propeptide that is removed on maturation. A glycan (N-linked (GlcNAc...) asparagine) is linked at Asn122. Disulfide bonds link Cys142/Cys209, Cys187/Cys238, and Cys197/Cys240.

This sequence belongs to the NGF-beta family. In terms of assembly, monomers and homodimers. Binds to NTRK2/TRKB. Can form heterodimers with other neurotrophin family members, such as NTF3 and NTF4 (in vitro), but the physiological relevance of this is not clear. BDNF precursor form: interacts with the heterodimer formed by NGFR and SORCS2. Mature BDNF has much lower affinity for the heterodimer formed by NGFR and SORCS2. Post-translationally, N-glycosylated and glycosulfated, contrary to mature BDNF. Mature BDNF is produced by proteolytic removal of the propeptide, catalyzed by a FURIN family member. In addition, the precursor form is proteolytically cleaved within the propeptide, but this is not an obligatory intermediate for the production of mature BDNF. Can be converted into mature BDNF by plasmin (PLG).

The protein resides in the secreted. Its function is as follows. Important signaling molecule that activates signaling cascades downstream of NTRK2. During development, promotes the survival and differentiation of selected neuronal populations of the peripheral and central nervous systems. Participates in axonal growth, pathfinding and in the modulation of dendritic growth and morphology. Major regulator of synaptic transmission and plasticity at adult synapses in many regions of the CNS. The versatility of BDNF is emphasized by its contribution to a range of adaptive neuronal responses including long-term potentiation (LTP), long-term depression (LTD), certain forms of short-term synaptic plasticity, as well as homeostatic regulation of intrinsic neuronal excitability. In terms of biological role, important signaling molecule that activates signaling cascades downstream of NTRK2. Activates signaling cascades via the heterodimeric receptor formed by NGFR and SORCS2. Signaling via NGFR and SORCS2 plays a role in synaptic plasticity and long-term depression (LTD). Binding to NGFR and SORCS2 promotes neuronal apoptosis. Promotes neuronal growth cone collapse. The protein is Neurotrophic factor BDNF precursor form (BDNF) of Lipotes vexillifer (Yangtze river dolphin).